The following is a 509-amino-acid chain: Serine/threonine protein kinase OSK4 (509 aa).

The Protein kinase domain maps to 17-269 (YNLGRTLGIG…IREIREHQWF (253 aa)). ATP is bound by residues 23 to 31 (LGIGSFGKV) and lysine 46. Catalysis depends on aspartate 140, which acts as the Proton acceptor. The 41-residue stretch at 290–330 (MIDEDTLQDVVNLGYEKDHVCESLRNRLQNEATVAYYLLLD) folds into the UBA domain. In terms of domain architecture, KA1 spans 460 to 508 (NGRLPAVIKFEIQLYKSRDEKYLLDMQRVTGPQLLFLDFCAAFLTKLRV).

Belongs to the protein kinase superfamily. Ser/Thr protein kinase family. Interacts with HDR1. Strongly expressed in immature seeds. Mostly expressed in panicles, leaf sheaths and roots, and to a lower extent, in germinating seeds and leaf blades.

It localises to the nucleus. The enzyme catalyses L-seryl-[protein] + ATP = O-phospho-L-seryl-[protein] + ADP + H(+). It carries out the reaction L-threonyl-[protein] + ATP = O-phospho-L-threonyl-[protein] + ADP + H(+). Suppressor of flowering in long days (LD) via the that up-regulation of HD1 and the down-regulation of EHD1. Can phosphorylate HD1 in the presence of HDR1. The chain is Serine/threonine protein kinase OSK4 from Oryza sativa subsp. indica (Rice).